We begin with the raw amino-acid sequence, 118 residues long: MLANYALIGIFLVAAISFPLIPLVLAFFLRPKRPTPLKTSTYECGLEAIGDVHVQFKVQYYLYALAFVIFDIEVIFLYPWAVAFNAVGLYGLIAATIFLLMLFAGLLYEWRKGALEWV.

A run of 3 helical transmembrane segments spans residues 8–28 (IGIFLVAAISFPLIPLVLAFF), 64–84 (ALAFVIFDIEVIFLYPWAVAF), and 87–107 (VGLYGLIAATIFLLMLFAGLL).

It belongs to the complex I subunit 3 family. NDH-1 is composed of 14 different subunits. Subunits NuoA, H, J, K, L, M, N constitute the membrane sector of the complex.

Its subcellular location is the cell membrane. The catalysed reaction is a quinone + NADH + 5 H(+)(in) = a quinol + NAD(+) + 4 H(+)(out). NDH-1 shuttles electrons from NADH, via FMN and iron-sulfur (Fe-S) centers, to quinones in the respiratory chain. The immediate electron acceptor for the enzyme in this species is believed to be ubiquinone. Couples the redox reaction to proton translocation (for every two electrons transferred, four hydrogen ions are translocated across the cytoplasmic membrane), and thus conserves the redox energy in a proton gradient. The chain is NADH-quinone oxidoreductase subunit A from Chloroflexus aurantiacus (strain ATCC 29366 / DSM 635 / J-10-fl).